We begin with the raw amino-acid sequence, 514 residues long: Serine--tRNA ligase, cytoplasmic (514 aa).

The residue at position 1 (methionine 1) is an N-acetylmethionine. An interaction with tRNA region spans residues 9 to 61 (RVDKGGDPALIRESQEKRFKDPGLVDQLVKADSEWRRCRFRADNLNKLKNLCS). Serine 241 is subject to Phosphoserine. 2 residues coordinate L-serine: threonine 271 and arginine 302. ATP-binding positions include 302 to 304 (RQE) and 318 to 321 (VHQF). The residue at position 323 (lysine 323) is an N6-acetyllysine. Residue glutamate 325 coordinates L-serine. 391 to 394 (ELVS) is a binding site for ATP. Asparagine 427 lines the L-serine pocket. Residues 475–514 (PIDQEPSKKQKKQHEGSKKKGAARDVALESQLQNMEVTDA) form a disordered region. Residues 479–501 (EPSKKQKKQHEGSKKKGAARDVA) show a composition bias toward basic and acidic residues. The Nuclear localization signal signature appears at 482 to 494 (KKQKKQHEGSKKK). Polar residues predominate over residues 504 to 514 (SQLQNMEVTDA).

It belongs to the class-II aminoacyl-tRNA synthetase family. Type-1 seryl-tRNA synthetase subfamily. Homodimer. The tRNA molecule may bind across the dimer. Interacts with SIRT2. Interacts with METTL6; interaction is required for the tRNA N(3)-methylcytidine methyltransferase activity of METTL6.

The protein localises to the cytoplasm. It is found in the nucleus. It catalyses the reaction tRNA(Ser) + L-serine + ATP = L-seryl-tRNA(Ser) + AMP + diphosphate + H(+). The enzyme catalyses tRNA(Sec) + L-serine + ATP = L-seryl-tRNA(Sec) + AMP + diphosphate + H(+). The protein operates within aminoacyl-tRNA biosynthesis; selenocysteinyl-tRNA(Sec) biosynthesis; L-seryl-tRNA(Sec) from L-serine and tRNA(Sec): step 1/1. In terms of biological role, catalyzes the attachment of serine to tRNA(Ser) in a two-step reaction: serine is first activated by ATP to form Ser-AMP and then transferred to the acceptor end of tRNA(Ser). Is probably also able to aminoacylate tRNA(Sec) with serine, to form the misacylated tRNA L-seryl-tRNA(Sec), which will be further converted into selenocysteinyl-tRNA(Sec). In the nucleus, binds to the VEGFA core promoter and prevents MYC binding and transcriptional activation by MYC. Recruits SIRT2 to the VEGFA promoter, promoting deacetylation of histone H4 at 'Lys-16' (H4K16). Thereby, inhibits the production of VEGFA and sprouting angiogenesis mediated by VEGFA. The chain is Serine--tRNA ligase, cytoplasmic (SARS1) from Bos taurus (Bovine).